The chain runs to 391 residues: NADH-quinone oxidoreductase subunit D (391 aa).

Belongs to the complex I 49 kDa subunit family. As to quaternary structure, NDH-1 is composed of 14 different subunits. Subunits NuoB, C, D, E, F, and G constitute the peripheral sector of the complex.

The protein resides in the cell inner membrane. It carries out the reaction a quinone + NADH + 5 H(+)(in) = a quinol + NAD(+) + 4 H(+)(out). NDH-1 shuttles electrons from NADH, via FMN and iron-sulfur (Fe-S) centers, to quinones in the respiratory chain. The immediate electron acceptor for the enzyme in this species is believed to be ubiquinone. Couples the redox reaction to proton translocation (for every two electrons transferred, four hydrogen ions are translocated across the cytoplasmic membrane), and thus conserves the redox energy in a proton gradient. This Rickettsia akari (strain Hartford) protein is NADH-quinone oxidoreductase subunit D.